Here is a 285-residue protein sequence, read N- to C-terminus: Phosphatase YwpJ (285 aa).

Residue aspartate 7 is the Nucleophile of the active site. Residue aspartate 7 participates in Mg(2+) binding. Leucine 8 serves as a coordination point for phosphate. Aspartate 9 provides a ligand contact to Mg(2+). Phosphate-binding positions include 41-42 and lysine 214; that span reads TG. Aspartate 237 and serine 238 together coordinate Mg(2+). Phosphate-binding positions include asparagine 240 and 282–283; that span reads KH.

It belongs to the HAD-like hydrolase superfamily. Cof family. The cofactor is Mg(2+).

Functionally, catalyzes the dephosphorylation of phosphorylated 5-6 carbon sugars and monophosphate nucleotides (NMP) in vitro. To a lesser extent, dephosphorylates flavin mononucleotide (FMN) in vitro. This chain is Phosphatase YwpJ (ywpJ), found in Bacillus subtilis (strain 168).